Consider the following 119-residue polypeptide: Beta-2-microglobulin (119 aa).

Residues 1–20 (MARFVVAALLVLLSLSGLEA) form the signal peptide. In terms of domain architecture, Ig-like C1-type spans 25 to 114 (PKIQVYSRHP…MTFPAPKTVK (90 aa)). Cysteines 45 and 100 form a disulfide.

Belongs to the beta-2-microglobulin family. Heterodimer of an alpha chain and a beta chain. Beta-2-microglobulin is the beta-chain of major histocompatibility complex class I molecules.

It localises to the secreted. In terms of biological role, component of the class I major histocompatibility complex (MHC). Involved in the presentation of peptide antigens to the immune system. This is Beta-2-microglobulin (B2M) from Pithecia irrorata (Gray monk saki).